The chain runs to 148 residues: uncharacterized protein (148 aa).

Disordered regions lie at residues 1–86 (MCPP…VQSP) and 122–148 (RAHRLPQPKPPCQSRQRPSPDSQTSPC). A compositionally biased stretch (basic residues) spans 38–57 (RPPKMQRRPRPPVAKRRRFP). Over residues 134 to 148 (QSRQRPSPDSQTSPC) the composition is skewed to polar residues.

Belongs to the Epstein-Barr virus BLLF2 family.

This is an uncharacterized protein from Homo sapiens (Human).